Here is a 230-residue protein sequence, read N- to C-terminus: Octanoyltransferase (230 aa).

The region spanning 40–218 is the BPL/LPL catalytic domain; sequence PSLDDVLILL…CFAEVFGVEL (179 aa). Substrate contacts are provided by residues 82 to 89, 149 to 151, and 162 to 164; these read RGGEVTYH, AIG, and GFA. Residue C180 is the Acyl-thioester intermediate of the active site.

It belongs to the LipB family.

The protein localises to the cytoplasm. It catalyses the reaction octanoyl-[ACP] + L-lysyl-[protein] = N(6)-octanoyl-L-lysyl-[protein] + holo-[ACP] + H(+). It participates in protein modification; protein lipoylation via endogenous pathway; protein N(6)-(lipoyl)lysine from octanoyl-[acyl-carrier-protein]: step 1/2. Functionally, catalyzes the transfer of endogenously produced octanoic acid from octanoyl-acyl-carrier-protein onto the lipoyl domains of lipoate-dependent enzymes. Lipoyl-ACP can also act as a substrate although octanoyl-ACP is likely to be the physiological substrate. This is Octanoyltransferase from Nostoc punctiforme (strain ATCC 29133 / PCC 73102).